A 305-amino-acid polypeptide reads, in one-letter code: GMP synthase [glutamine-hydrolyzing] subunit B (305 aa).

The region spanning 2–184 (VDANAFIDEA…LPLPEEISER (183 aa)) is the GMPS ATP-PPase domain. An ATP-binding site is contributed by 29–35 (SGGVDSS).

As to quaternary structure, heterodimer composed of a glutamine amidotransferase subunit (A) and a GMP-binding subunit (B).

The catalysed reaction is XMP + L-glutamine + ATP + H2O = GMP + L-glutamate + AMP + diphosphate + 2 H(+). The protein operates within purine metabolism; GMP biosynthesis; GMP from XMP (L-Gln route): step 1/1. Its function is as follows. Catalyzes the synthesis of GMP from XMP. The sequence is that of GMP synthase [glutamine-hydrolyzing] subunit B from Methanocella arvoryzae (strain DSM 22066 / NBRC 105507 / MRE50).